A 290-amino-acid chain; its full sequence is D-tagatose-1,6-bisphosphate aldolase subunit KbaY (290 aa).

Residue Asp-82 is the Proton donor of the active site. Residues His-83 and His-180 each contribute to the Zn(2+) site. Gly-181 serves as a coordination point for dihydroxyacetone phosphate. A Zn(2+)-binding site is contributed by His-208. Dihydroxyacetone phosphate is bound by residues Gly-209 to Ser-211 and Asn-230 to Thr-233.

This sequence belongs to the class II fructose-bisphosphate aldolase family. TagBP aldolase KbaY subfamily. Homotetramer. Forms a complex with KbaZ. Zn(2+) serves as cofactor.

It carries out the reaction D-tagatofuranose 1,6-bisphosphate = D-glyceraldehyde 3-phosphate + dihydroxyacetone phosphate. The protein operates within carbohydrate metabolism; D-tagatose 6-phosphate degradation; D-glyceraldehyde 3-phosphate and glycerone phosphate from D-tagatose 6-phosphate: step 2/2. Functionally, catalytic subunit of the tagatose-1,6-bisphosphate aldolase KbaYZ, which catalyzes the reversible aldol condensation of dihydroxyacetone phosphate (DHAP or glycerone-phosphate) with glyceraldehyde 3-phosphate (G3P) to produce tagatose 1,6-bisphosphate (TBP). Requires KbaZ subunit for full activity and stability. The chain is D-tagatose-1,6-bisphosphate aldolase subunit KbaY from Citrobacter koseri (strain ATCC BAA-895 / CDC 4225-83 / SGSC4696).